A 260-amino-acid chain; its full sequence is Tropinone reductase 2 (260 aa).

Residue 13–37 (LVTGGSRGIGYGIVEELANLGASVY) participates in NADP(+) binding. Serine 146 contributes to the substrate binding site. Tyrosine 159 functions as the Proton acceptor in the catalytic mechanism.

The protein belongs to the short-chain dehydrogenases/reductases (SDR) family.

It carries out the reaction pseudotropine + NADP(+) = tropinone + NADPH + H(+). It functions in the pathway alkaloid biosynthesis; tropane alkaloid biosynthesis. In terms of biological role, catalyzes the stereospecific reduction of tropinone to pseudotropine. This Hyoscyamus niger (Black henbane) protein is Tropinone reductase 2 (TR2).